The chain runs to 244 residues: Chaperone protein FimB/FhaD (244 aa).

Residues 1–24 (MARWRRRLGVAALGAAMLASLAPA) form the signal peptide.

This sequence belongs to the periplasmic pilus chaperone family.

The protein localises to the periplasm. Functionally, required for the biogenesis of the filamentous hemagglutinin and the fimbria. The polypeptide is Chaperone protein FimB/FhaD (fimB) (Bordetella pertussis (strain Tohama I / ATCC BAA-589 / NCTC 13251)).